Reading from the N-terminus, the 376-residue chain is Succinyl-diaminopimelate desuccinylase (376 aa).

Residue His66 participates in Zn(2+) binding. Asp68 is a catalytic residue. Position 99 (Asp99) interacts with Zn(2+). The Proton acceptor role is filled by Glu133. Glu134, Glu162, and His349 together coordinate Zn(2+).

This sequence belongs to the peptidase M20A family. DapE subfamily. As to quaternary structure, homodimer. Zn(2+) is required as a cofactor. It depends on Co(2+) as a cofactor.

The catalysed reaction is N-succinyl-(2S,6S)-2,6-diaminopimelate + H2O = (2S,6S)-2,6-diaminopimelate + succinate. It participates in amino-acid biosynthesis; L-lysine biosynthesis via DAP pathway; LL-2,6-diaminopimelate from (S)-tetrahydrodipicolinate (succinylase route): step 3/3. Its function is as follows. Catalyzes the hydrolysis of N-succinyl-L,L-diaminopimelic acid (SDAP), forming succinate and LL-2,6-diaminopimelate (DAP), an intermediate involved in the bacterial biosynthesis of lysine and meso-diaminopimelic acid, an essential component of bacterial cell walls. This is Succinyl-diaminopimelate desuccinylase from Ruthia magnifica subsp. Calyptogena magnifica.